The sequence spans 1209 residues: Calcium-activated potassium channel subunit alpha-1 (1209 aa).

Residues 1-26 (MANGGGGGGGGSSGSSGGGGGGGGGE) are compositionally biased toward gly residues. 2 disordered regions span residues 1–29 (MANG…ETAL) and 42–64 (LDAS…SVHE). The Extracellular segment spans residues 1-87 (MANGGGGGGG…VPCDSRGQRM (87 aa)). A compositionally biased stretch (low complexity) spans 45 to 61 (SSSSSSSSSSSSSSSSS). A helical membrane pass occupies residues 88 to 108 (WWAFLASSMVTFFGGLFIILL). Residues 109-179 (WRTLKYLWTV…MISAQTLTGR (71 aa)) are Cytoplasmic-facing. Residues C119, C120, and C122 are each lipidated (S-palmitoyl cysteine). A helical transmembrane segment spans residues 180-200 (VLVVLVFALSIGALVIYFIDS). At 201 to 215 (SNPIESCQNFYKDFT) the chain is on the extracellular side. A helical transmembrane segment spans residues 216-236 (LQIDMAFNVFFLLYFGLRFIA). The Cytoplasmic segment spans residues 237–240 (ANDK). The chain crosses the membrane as a helical span at residues 241 to 261 (LWFWLEVNSVVDFFTVPPVFV). The Extracellular segment spans residues 262 to 265 (SVYL). A helical; Voltage-sensor membrane pass occupies residues 266–286 (NRSWLGLRFLRALRLIQFSEI). Residues 287–301 (LQFLNILKTSNSIKL) are Cytoplasmic-facing. The chain crosses the membrane as a helical span at residues 302-322 (VNLLSIFISTWLTAAGFIHLV). Over 323–336 (ENSGDPWENFQNNQ) the chain is Extracellular. The segment at residues 337–359 (ALTYWECVYLLMVTMSTVGYGDV) is an intramembrane region (pore-forming). Residues 353-356 (TVGY) carry the Selectivity for potassium motif. At 360–368 (YAKTTLGRL) the chain is on the extracellular side. A helical transmembrane segment spans residues 369-389 (FMVFFILGGLAMFASYVPEII). Residues 390-1209 (ELIGNRKKYG…DKQKKEMVYR (820 aa)) are Cytoplasmic-facing. Positions 408 to 550 (RKHIVVCGHI…WNWKEGDDAI (143 aa)) constitute an RCK N-terminal 1 domain. Residues E440, Q463, and E465 each coordinate Mg(2+). The segment at 557-577 (LGFIAQSCLAQGLSTMLANLF) is segment S7. The segment at 614–634 (LSFPTVCELCFVKLKLLMIAI) is segment S8. Residues 682–686 (CKACH) are heme-binding motif. Positions 704–734 (EDEQPPTLSPKKKQRNGGMRNSPNTSPKLMR) are disordered. Residue T710 is modified to Phosphothreonine. Phosphoserine is present on residues S712, S725, and S729. The segment at 784-804 (VLSGHVVVCIFGDVSSALIGL) is segment S9. The RCK N-terminal 2 domain occupies 786–930 (SGHVVVCIFG…MDRSSPDNSP (145 aa)). At T917 the chain carries Phosphothreonine. Phosphoserine occurs at positions 925 and 929. Positions 977–999 (TELVNDTNVQFLDQDDDDDPDTE) match the Calcium bowl motif. The Ca(2+) site is built by Q986, D989, D992, and D994. Positions 1006–1026 (FACGTAFAVSVLDSLMSATYF) are segment S10. A compositionally biased stretch (low complexity) spans 1160–1185 (RASLSHSSHSSQSSSKKSSSVHSIPS). The tract at residues 1160-1209 (RASLSHSSHSSQSSSKKSSSVHSIPSTANRPNRPKSRESRDKQKKEMVYR) is disordered. Positions 1194–1209 (KSRESRDKQKKEMVYR) are enriched in basic and acidic residues. 2 positions are modified to phosphoserine: S1195 and S1198.

This sequence belongs to the potassium channel family. Calcium-activated (TC 1.A.1.3) subfamily. KCa1.1/KCNMA1 sub-subfamily. Homotetramer; which constitutes the calcium-activated potassium channel. Interacts with beta subunits KCNMB1, KCNMB2, KCNMB3 and KCNMB4. Interacts with gamma subunits LRRC26, LRRC38, LRRC52 and LRRC55. Beta and gamma subunits are accessory, and modulate its activity. Interacts with RAB11B. Post-translationally, phosphorylated. Phosphorylation by kinases such as PKA and/or PKG. In smooth muscles, phosphorylation affects its activity. In terms of processing, palmitoylation by ZDHHC22 and ZDHHC23 within the intracellular linker between the S0 and S1 transmembrane domains regulates localization to the plasma membrane. Depalmitoylated by LYPLA1 and LYPLAL1, leading to retard exit from the trans-Golgi network.

The protein resides in the cell membrane. It is found in the endoplasmic reticulum membrane. It carries out the reaction K(+)(in) = K(+)(out). With respect to regulation, ethanol and carbon monoxide-bound heme increase channel activation. Heme inhibits channel activation. Functionally, potassium channel activated by both membrane depolarization or increase in cytosolic Ca(2+) that mediates export of K(+). It is also activated by the concentration of cytosolic Mg(2+). Its activation dampens the excitatory events that elevate the cytosolic Ca(2+) concentration and/or depolarize the cell membrane. It therefore contributes to repolarization of the membrane potential. Plays a key role in controlling excitability in a number of systems, such as regulation of the contraction of smooth muscle, the tuning of hair cells in the cochlea, regulation of transmitter release, and innate immunity. In smooth muscles, its activation by high level of Ca(2+), caused by ryanodine receptors in the sarcoplasmic reticulum, regulates the membrane potential. In cochlea cells, its number and kinetic properties partly determine the characteristic frequency of each hair cell and thereby helps to establish a tonotopic map. Kinetics of KCNMA1 channels are determined by alternative splicing, phosphorylation status and its combination with modulating beta subunits. Highly sensitive to both iberiotoxin (IbTx) and charybdotoxin (CTX). Potassium channel activated by both membrane depolarization or increase in cytosolic Ca(2+) that mediates export of K(+). The protein is Calcium-activated potassium channel subunit alpha-1 (Kcnma1) of Rattus norvegicus (Rat).